Consider the following 159-residue polypeptide: NADH-quinone oxidoreductase subunit I (159 aa).

2 4Fe-4S ferredoxin-type domains span residues 51 to 80 (RRYE…IESD) and 90 to 119 (TRYD…EGPN). 8 residues coordinate [4Fe-4S] cluster: Cys60, Cys63, Cys66, Cys70, Cys99, Cys102, Cys105, and Cys109.

This sequence belongs to the complex I 23 kDa subunit family. As to quaternary structure, NDH-1 is composed of 14 different subunits. Subunits NuoA, H, J, K, L, M, N constitute the membrane sector of the complex. The cofactor is [4Fe-4S] cluster.

It is found in the cell inner membrane. It catalyses the reaction a quinone + NADH + 5 H(+)(in) = a quinol + NAD(+) + 4 H(+)(out). In terms of biological role, NDH-1 shuttles electrons from NADH, via FMN and iron-sulfur (Fe-S) centers, to quinones in the respiratory chain. The immediate electron acceptor for the enzyme in this species is believed to be ubiquinone. Couples the redox reaction to proton translocation (for every two electrons transferred, four hydrogen ions are translocated across the cytoplasmic membrane), and thus conserves the redox energy in a proton gradient. The protein is NADH-quinone oxidoreductase subunit I of Rickettsia typhi (strain ATCC VR-144 / Wilmington).